A 492-amino-acid polypeptide reads, in one-letter code: uncharacterized protein (492 aa).

It belongs to the FGGY kinase family.

This is an uncharacterized protein from Archaeoglobus fulgidus (strain ATCC 49558 / DSM 4304 / JCM 9628 / NBRC 100126 / VC-16).